A 685-amino-acid chain; its full sequence is Invasion protein InvA (685 aa).

Helical transmembrane passes span 17–37, 39–59, 61–81, 110–130, 197–217, 235–255, 274–294, and 295–315; these read ILVL…TYLV, FLIA…FYID, ILSF…RLAL, SLAV…IVIT, AIAG…VGMT, IGDG…AGFI, LLNN…MGTL, and PGFP…LFYF.

This sequence belongs to the FHIPEP (flagella/HR/invasion proteins export pore) family.

The protein localises to the cell inner membrane. Its function is as follows. Involved in the invasion of the cells of the intestinal epithelium. Could be involved in the translocation of the InvE protein. This Salmonella typhi protein is Invasion protein InvA (invA).